Reading from the N-terminus, the 62-residue chain is UPF0434 protein BP2767 (62 aa).

Belongs to the UPF0434 family.

In Bordetella pertussis (strain Tohama I / ATCC BAA-589 / NCTC 13251), this protein is UPF0434 protein BP2767.